The following is a 400-amino-acid chain: Hyaluronan and proteoglycan link protein 4 (400 aa).

A signal peptide spans 1–30; it reads MACAPGALGHRALWAVAWGLLLLVPVLAGA. One can recognise an Ig-like C2-type domain in the interval 47 to 155; the sequence is SVVVQTAPGQ…VTNELEDDVG (109 aa). 5 disulfides stabilise this stretch: C69–C144, C186–C264, C210–C231, C291–C361, and C316–C337. N-linked (GlcNAc...) asparagine glycosylation is present at N133. Link domains follow at residues 164–266 and 271–363; these read VVFP…FCFT and GRVF…YCYR.

The protein belongs to the HAPLN family. In terms of tissue distribution, expressed predominantly in brain where it is found mainly throughout the midbrain and hindbrain in a perineuronal net pattern.

It is found in the secreted. The protein localises to the extracellular space. It localises to the extracellular matrix. Its function is as follows. Essential for the proper localization of brevican (BCAN), mainly as a perineuronal nets (PNNs)-type deposition in the brainstem and cerebellum thereby playing a key role in the formation and structural organization of PNNs. Contributes to the formation and transmission of inhibitory GABAergic synapses between Purkinje cells and deep cerebellar nuclei neurons. The sequence is that of Hyaluronan and proteoglycan link protein 4 (Hapln4) from Mus musculus (Mouse).